The chain runs to 253 residues: Flap endonuclease Xni (253 aa).

A Mg(2+)-binding site is contributed by aspartate 104. Residues 160-250 (VAPQQLTDFW…HGNLQQLRLN (91 aa)) enclose the 5'-3' exonuclease domain. The K(+) site is built by leucine 171, alanine 172, proline 180, isoleucine 182, and isoleucine 185. The interaction with DNA stretch occupies residues 184–189 (GIGAKT).

This sequence belongs to the Xni family. The cofactor is Mg(2+). K(+) is required as a cofactor.

In terms of biological role, has flap endonuclease activity. During DNA replication, flap endonucleases cleave the 5'-overhanging flap structure that is generated by displacement synthesis when DNA polymerase encounters the 5'-end of a downstream Okazaki fragment. The protein is Flap endonuclease Xni of Edwardsiella ictaluri (strain 93-146).